A 176-amino-acid polypeptide reads, in one-letter code: MALKEYQVVGRKVPTEHEPVPKLFRMRLFAPNESVAKSRYWYFLKMINKVKKATGEIVAINEISEPKPLKAKVFGIWIRYDSRSGTHNMYKEFRDTTRVGAVEAMYADMAARHRARFRSIRILKVVEVEKKEDVRRNYVKQLLNPHLKFPLPHRRTGVVGLAGKKVFAPHRPSTFY.

This sequence belongs to the eukaryotic ribosomal protein eL20 family. In terms of assembly, component of the large ribosomal subunit (LSU). Mature yeast ribosomes consist of a small (40S) and a large (60S) subunit. The 40S small subunit contains 1 molecule of ribosomal RNA (18S rRNA) and at least 33 different proteins. The large 60S subunit contains 3 rRNA molecules (25S, 5.8S and 5S rRNA) and at least 46 different proteins. eL20 forms multiple interactions with RNA and proteins in the central protuberance, connecting components of core functional centers that are located far apart.

The protein localises to the cytoplasm. In terms of biological role, component of the ribosome, a large ribonucleoprotein complex responsible for the synthesis of proteins in the cell. The small ribosomal subunit (SSU) binds messenger RNAs (mRNAs) and translates the encoded message by selecting cognate aminoacyl-transfer RNA (tRNA) molecules. The large subunit (LSU) contains the ribosomal catalytic site termed the peptidyl transferase center (PTC), which catalyzes the formation of peptide bonds, thereby polymerizing the amino acids delivered by tRNAs into a polypeptide chain. The nascent polypeptides leave the ribosome through a tunnel in the LSU and interact with protein factors that function in enzymatic processing, targeting, and the membrane insertion of nascent chains at the exit of the ribosomal tunnel. This is Large ribosomal subunit protein eL20A (rpl2001) from Schizosaccharomyces pombe (strain 972 / ATCC 24843) (Fission yeast).